A 144-amino-acid chain; its full sequence is Putative low molecular weight protein-tyrosine-phosphatase (144 aa).

Cysteine 9 (nucleophile) is an active-site residue. Arginine 15 is an active-site residue. Aspartate 115 acts as the Proton donor in catalysis.

It belongs to the low molecular weight phosphotyrosine protein phosphatase family.

The enzyme catalyses O-phospho-L-tyrosyl-[protein] + H2O = L-tyrosyl-[protein] + phosphate. This Klebsiella pneumoniae protein is Putative low molecular weight protein-tyrosine-phosphatase.